A 226-amino-acid polypeptide reads, in one-letter code: Cytidylate kinase (226 aa).

10–18 (GPASSGKST) contributes to the ATP binding site.

Belongs to the cytidylate kinase family. Type 1 subfamily.

The protein localises to the cytoplasm. It catalyses the reaction CMP + ATP = CDP + ADP. It carries out the reaction dCMP + ATP = dCDP + ADP. This Enterococcus faecalis (strain ATCC 700802 / V583) protein is Cytidylate kinase.